Consider the following 1551-residue polypeptide: MCSRGDANTADAAAARRVTGLRYNMRLLIALALPCLFSLAEANSKAITTSLTTKWFSAPLLLEASEFLAEDSQEKFWSFVEATQNIGSSDHHDTDHSYYDAVLEAAFRFLSPLQQNLLKFCLSLRSYSASIQAFQQIAVDEPPPEGCKSFLSVHGKQTCDLDTLESLLLTAADRPKPLLFKGDHRYPSSNPESPVVILYSEIGHEEFSNIHHQLISKSNEGKINYVFRHYISNPSKEPVYLSGYGVELAIKSTEYKAKDDTQVKGTEVNATVIGESDPIDEVQGFLFGKLRELYPALEGQLKEFRKHLVESTNEMAPLKVWQLQDLSFQTAARILAASGALSLVVMKDISQNFPTKARAITKTAVSAQLRAEVEENQKYFKGTIGLQPGDSALFINGLHIDLDTQDIFSLFDTLRNEARVMEGLHRLGIEGLSLHNILKLNIQPSETDYAVDIRSPAISWVNNLEVDSRYNSWPSSLQELLRPTFPGVIRQIRKNLHNMVFIIDPVHETTAELISIAEMFLSNHIPLRIGFIFVVNDSEDVDGMQDAGVAVLRAYNYVAQEVDGYHAFQTLTQIYNKVRTGETVKVEHVVSVLEKKYPYVEVNSILGIDSAYDQNRKEARGYYEQTGVGPLPVVLFNGMPFEKEQLDPDELETITMHKILETTTFFQRAVYLGELSHDQDVVEYIMNQPNVVPRINSRILTAKREYLDLTASNNFYVDDFARFSALDSRGKTAAIANSMNYLTKKGMSSKEIYDDSFIRPVTFWIVGDFDSPSGRQLLYDAIKHQKTSNNVRISMINNPSQEISDSSTPIFRAIWAALQTQASSSAKNFITKMAKEETAEALAAGVDIAEFSVGGMDVSLFKEVFESSRMDFILSHALYCRDVLKLKKGQRVVISNGRIIGPLEDNELFNQDDFHLLENIILKTSGQKIKSHIQQLRVEEDVASDLVMKVDALLSAQPKGEARIEYQFFEDKHSAIKLKPKEGETYYDVVAVVDPVTREAQRLAPLLLVLTQLINMNLRVFMNCQSKLSDMPLKSFYRYVLEPEISFTADSSFAKGPIAKFLDMPQSPLFTLNLNTPESWMVESVRTPYDLDNIYLEEVDSIVAAEYELEYLLLEGHCYDITTGQPPRGLQFTLGTSANPTIVDTIVMANLGYFQLKANPGAWILRLRKGRSDDIYRIYSHDGTDSPPDANDVVVILNNFKSKIIKVKVQKKADMANEDLLSDGTNENESGFWDSFKWGFSGQKAEEVKQDKDDIINIFSVASGHLYERFLRIMMLSVLKNTKTPVKFWFLKNYLSPTFKEFIPYMAKKYNFQYELVQYKWPRWLHQQTEKQRIIWGYKILFLDVLFPLVVDKFLFVDADQIVRTDLKELRDFNLDGAPYGYTPFCDSRREMDGYRFWKSGYWASHLAGRKYHISALYVVDLKKFRKIAAGDRLRGQYQGLSQDPNSLSNLDQDLPNNMIHQVPIKSLPQEWLWCETWCDDASKKRAKTIDLCNNPMTKEPKLEAAVRIVPEWQDYDQEIKQLQTLFQEEKELGTLHTEETQEGSQKHEEL.

Positions 1–42 (MCSRGDANTADAAAARRVTGLRYNMRLLIALALPCLFSLAEA) are cleaved as a signal peptide. 3 N-linked (GlcNAc...) asparagine glycosylation sites follow: Asn269, Asn536, and Asn1228. The segment at 1244-1551 (KAEEVKQDKD…QEGSQKHEEL (308 aa)) is glucosyltransferase. Ser1277 is modified (phosphoserine). The interval 1531–1551 (KELGTLHTEETQEGSQKHEEL) is disordered. A Prevents secretion from ER motif is present at residues 1548-1551 (HEEL).

This sequence belongs to the glycosyltransferase 8 family. Monomer as well as in a tight complex with SELENOF. Interacts with METTL23. Part of a large chaperone multiprotein complex comprising DNAJB11, HSP90B1, HSPA5, HYOU, PDIA2, PDIA4, PDIA6, PPIB, SDF2L1, UGGT1 and very small amounts of ERP29, but not, or at very low levels, CALR nor CANX. It depends on Ca(2+) as a cofactor. The cofactor is Mn(2+).

The protein localises to the endoplasmic reticulum lumen. It localises to the endoplasmic reticulum-Golgi intermediate compartment. It catalyses the reaction N(4)-(alpha-D-Man-(1-&gt;2)-alpha-D-Man-(1-&gt;2)-alpha-D-Man-(1-&gt;3)-[alpha-D-Man-(1-&gt;2)-alpha-D-Man-(1-&gt;3)-[alpha-D-Man-(1-&gt;2)-alpha-D-Man-(1-&gt;6)]-alpha-D-Man-(1-&gt;6)]-beta-D-Man-(1-&gt;4)-beta-D-GlcNAc-(1-&gt;4)-beta-D-GlcNAc)-L-asparaginyl-[protein] (N-glucan mannose isomer 9A1,2,3B1,2,3) + UDP-alpha-D-glucose = N(4)-(alpha-D-Glc-(1-&gt;3)-alpha-D-Man-(1-&gt;2)-alpha-D-Man-(1-&gt;2)-alpha-D-Man-(1-&gt;3)-[alpha-D-Man-(1-&gt;2)-alpha-D-Man-(1-&gt;3)-[alpha-D-Man-(1-&gt;2)-alpha-D-Man-(1-&gt;6)]-alpha-D-Man-(1-&gt;6)]-beta-D-Man-(1-&gt;4)-beta-D-GlcNAc-(1-&gt;4)-beta-D-GlcNAc)-L-asparaginyl-[protein] + UDP + H(+). It participates in protein modification; protein glycosylation. In terms of biological role, recognizes glycoproteins with minor folding defects. Reglucosylates single N-glycans near the misfolded part of the protein, thus providing quality control for protein folding in the endoplasmic reticulum. Reglucosylated proteins are recognized by calreticulin for recycling to the endoplasmic reticulum and refolding or degradation. The sequence is that of UDP-glucose:glycoprotein glucosyltransferase 1 (Uggt1) from Mus musculus (Mouse).